The following is a 169-amino-acid chain: GTP-dependent dephospho-CoA kinase (169 aa).

GTP-binding residues include Asp45, Asp64, and Glu121.

This sequence belongs to the GTP-dependent DPCK family.

The enzyme catalyses 3'-dephospho-CoA + GTP = GDP + CoA + H(+). It participates in cofactor biosynthesis; coenzyme A biosynthesis. Its function is as follows. Catalyzes the GTP-dependent phosphorylation of the 3'-hydroxyl group of dephosphocoenzyme A to form coenzyme A (CoA). This chain is GTP-dependent dephospho-CoA kinase, found in Methanobrevibacter smithii (strain ATCC 35061 / DSM 861 / OCM 144 / PS).